A 549-amino-acid polypeptide reads, in one-letter code: Chaperonin GroEL (549 aa).

Residues 30–33 (TLGP), Lys-51, 87–91 (DGTTT), Gly-415, and Asp-496 each bind ATP.

This sequence belongs to the chaperonin (HSP60) family. Forms a cylinder of 14 subunits composed of two heptameric rings stacked back-to-back. Interacts with the co-chaperonin GroES.

It localises to the cytoplasm. The catalysed reaction is ATP + H2O + a folded polypeptide = ADP + phosphate + an unfolded polypeptide.. Functionally, together with its co-chaperonin GroES, plays an essential role in assisting protein folding. The GroEL-GroES system forms a nano-cage that allows encapsulation of the non-native substrate proteins and provides a physical environment optimized to promote and accelerate protein folding. The protein is Chaperonin GroEL of Prosthecochloris aestuarii (strain DSM 271 / SK 413).